The following is a 185-amino-acid chain: Sulfopyruvate decarboxylase subunit beta (185 aa).

This sequence belongs to the TPP enzyme family. Heterododecamer composed of 6 subunits alpha and 6 subunits beta. Thiamine diphosphate is required as a cofactor.

It carries out the reaction 3-sulfopyruvate + H(+) = sulfoacetaldehyde + CO2. It functions in the pathway cofactor biosynthesis; coenzyme M biosynthesis; sulfoacetaldehyde from phosphoenolpyruvate and sulfite: step 4/4. Its function is as follows. Involved in the biosynthesis of the coenzyme M (2-mercaptoethanesulfonic acid). Catalyzes the decarboxylation of sulfopyruvate to sulfoacetaldehyde. The sequence is that of Sulfopyruvate decarboxylase subunit beta from Methanothermobacter thermautotrophicus (strain ATCC 29096 / DSM 1053 / JCM 10044 / NBRC 100330 / Delta H) (Methanobacterium thermoautotrophicum).